A 106-amino-acid polypeptide reads, in one-letter code: Chaperone modulatory protein CbpM (106 aa).

This sequence belongs to the CbpM family.

In terms of biological role, interacts with CbpA and inhibits both the DnaJ-like co-chaperone activity and the DNA binding activity of CbpA. Together with CbpA, modulates the activity of the DnaK chaperone system. Does not inhibit the co-chaperone activity of DnaJ. The protein is Chaperone modulatory protein CbpM of Coxiella burnetii (strain CbuK_Q154) (Coxiella burnetii (strain Q154)).